The following is a 101-amino-acid chain: Small ribosomal subunit protein uS14 (101 aa).

It belongs to the universal ribosomal protein uS14 family. Part of the 30S ribosomal subunit. Contacts proteins S3 and S10.

Binds 16S rRNA, required for the assembly of 30S particles and may also be responsible for determining the conformation of the 16S rRNA at the A site. The chain is Small ribosomal subunit protein uS14 from Nitrosospira multiformis (strain ATCC 25196 / NCIMB 11849 / C 71).